We begin with the raw amino-acid sequence, 485 residues long: NADH-quinone oxidoreductase subunit N (485 aa).

The next 14 membrane-spanning stretches (helical) occupy residues Leu8–Ile28, Phe35–Val55, Gly71–Ala91, Phe105–Leu125, Ser127–Phe147, Tyr159–Ala179, Leu203–Phe223, Pro235–Met255, Val271–Gln291, Leu297–Gln317, Val326–Leu346, Ala373–Ile393, Trp408–Val430, and Ile455–Ile475.

This sequence belongs to the complex I subunit 2 family. NDH-1 is composed of 13 different subunits. Subunits NuoA, H, J, K, L, M, N constitute the membrane sector of the complex.

The protein resides in the cell inner membrane. It catalyses the reaction a quinone + NADH + 5 H(+)(in) = a quinol + NAD(+) + 4 H(+)(out). NDH-1 shuttles electrons from NADH, via FMN and iron-sulfur (Fe-S) centers, to quinones in the respiratory chain. The immediate electron acceptor for the enzyme in this species is believed to be ubiquinone. Couples the redox reaction to proton translocation (for every two electrons transferred, four hydrogen ions are translocated across the cytoplasmic membrane), and thus conserves the redox energy in a proton gradient. The sequence is that of NADH-quinone oxidoreductase subunit N from Escherichia coli O6:K15:H31 (strain 536 / UPEC).